A 104-amino-acid polypeptide reads, in one-letter code: UPF0145 protein VNG_2432C (104 aa).

The protein belongs to the UPF0145 family.

The chain is UPF0145 protein VNG_2432C from Halobacterium salinarum (strain ATCC 700922 / JCM 11081 / NRC-1) (Halobacterium halobium).